Consider the following 64-residue polypeptide: MRVLYLLFSFLFIFLMPLPGVFGGIGDPVTCLKSGAICHPVFCPRRYKQIGTCGLPGTKCCKKP.

Residues 1–23 form the signal peptide; that stretch reads MRVLYLLFSFLFIFLMPLPGVFG. 3 cysteine pairs are disulfide-bonded: cysteine 31–cysteine 60, cysteine 38–cysteine 53, and cysteine 43–cysteine 61. Residues 33–48 form a phosphatidylinositol 4,5-bisphosphate (PIP2) binding region; sequence KSGAICHPVFCPRRYK.

It belongs to the beta-defensin family. LAP/TAP subfamily. In terms of assembly, monomer. Homodimer. In terms of tissue distribution, expressed in lung epithelial cells (at protein level). Expressed in foreskin, lung and trachea. Lower expression in kidney, uterus and salivary gland tissue. Expressed in epithelial cells of the respiratory tract, with higher expression in distal parenchyma of the lung, trachea, and tonsils, and lower expression in pharynx and adenoid, and low expression in tongue and larynx.

It localises to the secreted. Functionally, exhibits antimicrobial activity against Gram-negative bacteria and Gram-positive bacteria, with highest activity against Gram-negative bacteria. Antimicrobial activity against P.aruginosa seems to be salt-sensitive and is reduced with high salt concentrations greater than 25 mM. Also exhibits antimicrobial activity against the yeast C.albicans. Permeabilizes C.albicans cell membranes via targeting plasma membrane lipid phosphatidylinositol 4,5-bisphosphate (PIP2), thereby leading to cell fragmentation and cell death. Acts as a ligand for C-C chemokine receptor CCR6. Binds to CCR6 and induces chemotactic activity of CCR6-expressing cells, such as immature dendritic cells and memory T cells. This is Defensin beta 4A (DEFB4A) from Homo sapiens (Human).